The following is a 99-amino-acid chain: Large ribosomal subunit protein eL36 (99 aa).

This sequence belongs to the eukaryotic ribosomal protein eL36 family. Component of the large ribosomal subunit. Mature ribosomes consist of a small (40S) and a large (60S) subunit. The 40S subunit contains about 32 different proteins and 1 molecule of RNA (18S). The 60S subunit contains 45 different proteins and 3 molecules of RNA (25S, 5.8S and 5S).

It is found in the cytoplasm. Component of the ribosome, a large ribonucleoprotein complex responsible for the synthesis of proteins in the cell. The small ribosomal subunit (SSU) binds messenger RNAs (mRNAs) and translates the encoded message by selecting cognate aminoacyl-transfer RNA (tRNA) molecules. The large subunit (LSU) contains the ribosomal catalytic site termed the peptidyl transferase center (PTC), which catalyzes the formation of peptide bonds, thereby polymerizing the amino acids delivered by tRNAs into a polypeptide chain. The nascent polypeptides leave the ribosome through a tunnel in the LSU and interact with protein factors that function in enzymatic processing, targeting, and the membrane insertion of nascent chains at the exit of the ribosomal tunnel. The sequence is that of Large ribosomal subunit protein eL36 from Candida albicans (strain SC5314 / ATCC MYA-2876) (Yeast).